Here is a 632-residue protein sequence, read N- to C-terminus: 1-deoxy-D-xylulose-5-phosphate synthase (632 aa).

Thiamine diphosphate contacts are provided by residues H87 and 128–130 (GHS). D159 contacts Mg(2+). Thiamine diphosphate contacts are provided by residues 160–161 (GA), N188, F295, and E377. Mg(2+) is bound at residue N188.

Belongs to the transketolase family. DXPS subfamily. In terms of assembly, homodimer. Mg(2+) is required as a cofactor. Thiamine diphosphate serves as cofactor.

It catalyses the reaction D-glyceraldehyde 3-phosphate + pyruvate + H(+) = 1-deoxy-D-xylulose 5-phosphate + CO2. It participates in metabolic intermediate biosynthesis; 1-deoxy-D-xylulose 5-phosphate biosynthesis; 1-deoxy-D-xylulose 5-phosphate from D-glyceraldehyde 3-phosphate and pyruvate: step 1/1. Its function is as follows. Catalyzes the acyloin condensation reaction between C atoms 2 and 3 of pyruvate and glyceraldehyde 3-phosphate to yield 1-deoxy-D-xylulose-5-phosphate (DXP). This Stutzerimonas stutzeri (strain A1501) (Pseudomonas stutzeri) protein is 1-deoxy-D-xylulose-5-phosphate synthase.